A 127-amino-acid polypeptide reads, in one-letter code: MVLPKGMRLKGYKSFDYIHKSAKRYKSDSMMLRVTKANERLIKSTIKNSKSNSCRCAISISNKVSKKAVIRNRLRRLLHNHLKKRLFQKDAFSNNWLLLSLSPKCLDKNTENLLEECDKLLIEAGFC.

It belongs to the RnpA family. In terms of assembly, consists of a catalytic RNA component (M1 or rnpB) and a protein subunit.

It catalyses the reaction Endonucleolytic cleavage of RNA, removing 5'-extranucleotides from tRNA precursor.. Its function is as follows. RNaseP catalyzes the removal of the 5'-leader sequence from pre-tRNA to produce the mature 5'-terminus. It can also cleave other RNA substrates such as 4.5S RNA. The protein component plays an auxiliary but essential role in vivo by binding to the 5'-leader sequence and broadening the substrate specificity of the ribozyme. The polypeptide is Ribonuclease P protein component (Prochlorococcus marinus (strain SARG / CCMP1375 / SS120)).